The sequence spans 173 residues: Adenine phosphoribosyltransferase (173 aa).

The protein belongs to the purine/pyrimidine phosphoribosyltransferase family. In terms of assembly, homodimer.

It localises to the cytoplasm. It carries out the reaction AMP + diphosphate = 5-phospho-alpha-D-ribose 1-diphosphate + adenine. It functions in the pathway purine metabolism; AMP biosynthesis via salvage pathway; AMP from adenine: step 1/1. Catalyzes a salvage reaction resulting in the formation of AMP, that is energically less costly than de novo synthesis. This is Adenine phosphoribosyltransferase from Ureaplasma parvum serovar 3 (strain ATCC 27815 / 27 / NCTC 11736).